The sequence spans 177 residues: Large ribosomal subunit protein uL6 (177 aa).

Belongs to the universal ribosomal protein uL6 family. In terms of assembly, part of the 50S ribosomal subunit.

In terms of biological role, this protein binds to the 23S rRNA, and is important in its secondary structure. It is located near the subunit interface in the base of the L7/L12 stalk, and near the tRNA binding site of the peptidyltransferase center. The protein is Large ribosomal subunit protein uL6 of Janthinobacterium sp. (strain Marseille) (Minibacterium massiliensis).